Consider the following 436-residue polypeptide: MPCRILTLQSEAQWPLLGDMLAGRYDPDDAVEPVVRDILAAVRSKGDEALAEYTRRFDCPDFTPALLHVTSEEVAQAVASVPADDIAIIRQAADNIRSFHEAQKERSWFVTHDDGTILGQKVTPVDRAGLYVPGGKGGDTPLLSSLLMNAIPAQVAGVTSITVASPPRPDGTLNPHLLAAAHILGITDIIRAGSAWAVAAFAFGTQTIAPVDVIAGPGNIFVTTAKRMVQGRVAIDMIAGPSEILILADATARPDWVAADMLSQAEHDPLASSILVTTEPALAEAVTAELERQLATLPRADIARKALADWGAVVVVPDMDVAVAIANRVAPEHLEVLTAQPWELAGSLRHAGALFLGPYSPEPLGDYFAGPNHVLPTMGTARFSSALSVQTFCKRTSIIAASRAFAERNADAVARLARLEGLEAHARSAASRNSQQ.

The substrate site is built by S242, Q264, and H267. Zn(2+)-binding residues include Q264 and H267. Residues E332 and H333 each act as proton acceptor in the active site. 4 residues coordinate substrate: H333, D366, E420, and H425. D366 serves as a coordination point for Zn(2+). H425 is a Zn(2+) binding site.

The protein belongs to the histidinol dehydrogenase family. It depends on Zn(2+) as a cofactor.

The enzyme catalyses L-histidinol + 2 NAD(+) + H2O = L-histidine + 2 NADH + 3 H(+). It participates in amino-acid biosynthesis; L-histidine biosynthesis; L-histidine from 5-phospho-alpha-D-ribose 1-diphosphate: step 9/9. In terms of biological role, catalyzes the sequential NAD-dependent oxidations of L-histidinol to L-histidinaldehyde and then to L-histidine. The sequence is that of Histidinol dehydrogenase from Nitratidesulfovibrio vulgaris (strain ATCC 29579 / DSM 644 / CCUG 34227 / NCIMB 8303 / VKM B-1760 / Hildenborough) (Desulfovibrio vulgaris).